A 390-amino-acid polypeptide reads, in one-letter code: 1-deoxy-D-xylulose 5-phosphate reductoisomerase (390 aa).

Positions 10, 11, 12, 13, 36, 38, and 124 each coordinate NADPH. Lys125 provides a ligand contact to 1-deoxy-D-xylulose 5-phosphate. An NADPH-binding site is contributed by Glu126. Residue Asp150 participates in Mn(2+) binding. 1-deoxy-D-xylulose 5-phosphate contacts are provided by Ser151, Glu152, Ser176, and His199. Glu152 is a binding site for Mn(2+). Gly205 serves as a coordination point for NADPH. 1-deoxy-D-xylulose 5-phosphate is bound by residues Ser212, Asn217, Lys218, and Glu221. A Mn(2+)-binding site is contributed by Glu221.

This sequence belongs to the DXR family. It depends on Mg(2+) as a cofactor. Mn(2+) is required as a cofactor.

It carries out the reaction 2-C-methyl-D-erythritol 4-phosphate + NADP(+) = 1-deoxy-D-xylulose 5-phosphate + NADPH + H(+). The protein operates within isoprenoid biosynthesis; isopentenyl diphosphate biosynthesis via DXP pathway; isopentenyl diphosphate from 1-deoxy-D-xylulose 5-phosphate: step 1/6. In terms of biological role, catalyzes the NADPH-dependent rearrangement and reduction of 1-deoxy-D-xylulose-5-phosphate (DXP) to 2-C-methyl-D-erythritol 4-phosphate (MEP). The polypeptide is 1-deoxy-D-xylulose 5-phosphate reductoisomerase (Microcystis aeruginosa (strain NIES-843 / IAM M-2473)).